A 286-amino-acid polypeptide reads, in one-letter code: Bifunctional protein FolD (286 aa).

Position 166–168 (166–168 (GAS)) interacts with NADP(+).

The protein belongs to the tetrahydrofolate dehydrogenase/cyclohydrolase family. In terms of assembly, homodimer.

The catalysed reaction is (6R)-5,10-methylene-5,6,7,8-tetrahydrofolate + NADP(+) = (6R)-5,10-methenyltetrahydrofolate + NADPH. It catalyses the reaction (6R)-5,10-methenyltetrahydrofolate + H2O = (6R)-10-formyltetrahydrofolate + H(+). Its pathway is one-carbon metabolism; tetrahydrofolate interconversion. Catalyzes the oxidation of 5,10-methylenetetrahydrofolate to 5,10-methenyltetrahydrofolate and then the hydrolysis of 5,10-methenyltetrahydrofolate to 10-formyltetrahydrofolate. The sequence is that of Bifunctional protein FolD from Idiomarina loihiensis (strain ATCC BAA-735 / DSM 15497 / L2-TR).